Consider the following 301-residue polypeptide: Probable alpha-L-glutamate ligase (301 aa).

The 184-residue stretch at 104–287 (LQLLSRKGIG…VAGMIVEFIE (184 aa)) folds into the ATP-grasp domain. ATP is bound by residues Lys141, 178–179 (EF), Asp187, and 211–213 (RSN). Residues Asp248, Glu260, and Asn262 each coordinate Mg(2+). Residues Asp248, Glu260, and Asn262 each contribute to the Mn(2+) site.

The protein belongs to the RimK family. Mg(2+) serves as cofactor. Mn(2+) is required as a cofactor.

This Teredinibacter turnerae (strain ATCC 39867 / T7901) protein is Probable alpha-L-glutamate ligase.